The chain runs to 309 residues: Glutaminase (309 aa).

7 residues coordinate substrate: Ser-64, Asn-114, Glu-160, Asn-167, Tyr-191, Tyr-243, and Val-261.

Belongs to the glutaminase family. As to quaternary structure, homotetramer.

It carries out the reaction L-glutamine + H2O = L-glutamate + NH4(+). The protein is Glutaminase of Rhizobium rhizogenes (strain K84 / ATCC BAA-868) (Agrobacterium radiobacter).